The primary structure comprises 199 residues: GTP cyclohydrolase-2 (199 aa).

GTP is bound at residue 49–53 (RIHSE). 3 residues coordinate Zn(2+): Cys-54, Cys-65, and Cys-67. GTP-binding positions include Gln-70, 92–94 (EGR), and Thr-114. The active-site Proton acceptor is Asp-126. Arg-128 functions as the Nucleophile in the catalytic mechanism. GTP contacts are provided by Thr-149 and Lys-154.

Belongs to the GTP cyclohydrolase II family. In terms of assembly, homodimer. Zn(2+) serves as cofactor.

The enzyme catalyses GTP + 4 H2O = 2,5-diamino-6-hydroxy-4-(5-phosphoribosylamino)-pyrimidine + formate + 2 phosphate + 3 H(+). It participates in cofactor biosynthesis; riboflavin biosynthesis; 5-amino-6-(D-ribitylamino)uracil from GTP: step 1/4. Its function is as follows. Catalyzes the conversion of GTP to 2,5-diamino-6-ribosylamino-4(3H)-pyrimidinone 5'-phosphate (DARP), formate and pyrophosphate. In Blochmanniella floridana, this protein is GTP cyclohydrolase-2.